Here is a 60-residue protein sequence, read N- to C-terminus: Small ribosomal subunit protein eS31 (60 aa).

Cysteine 24, cysteine 27, cysteine 42, and cysteine 45 together coordinate Zn(2+). The C4-type zinc-finger motif lies at 24-45; it reads CPRCGPGVFMADHGNRYACGRC.

The protein belongs to the eukaryotic ribosomal protein eS31 family. As to quaternary structure, part of the 30S ribosomal subunit. The cofactor is Zn(2+).

This chain is Small ribosomal subunit protein eS31, found in Methanopyrus kandleri (strain AV19 / DSM 6324 / JCM 9639 / NBRC 100938).